The sequence spans 1025 residues: Error-prone DNA polymerase (1025 aa).

This sequence belongs to the DNA polymerase type-C family. DnaE2 subfamily.

The protein resides in the cytoplasm. The enzyme catalyses DNA(n) + a 2'-deoxyribonucleoside 5'-triphosphate = DNA(n+1) + diphosphate. In terms of biological role, DNA polymerase involved in damage-induced mutagenesis and translesion synthesis (TLS). It is not the major replicative DNA polymerase. The protein is Error-prone DNA polymerase of Pseudomonas fluorescens (strain Pf0-1).